The sequence spans 1011 residues: Probable beta-galactosidase E (1011 aa).

The N-terminal stretch at 1–19 is a signal peptide; that stretch reads MKSLLKRLIALAAAYSVAA. Substrate contacts are provided by Tyr-92, Asn-136, Ala-137, Glu-138, and Asn-195. Glu-196 acts as the Proton donor in catalysis. Residue Asn-202 is glycosylated (N-linked (GlcNAc...) asparagine). Tyr-261 lines the substrate pocket. Cys-267 and Cys-316 are disulfide-bonded. The Nucleophile role is filled by Glu-299. Residue Tyr-365 participates in substrate binding. N-linked (GlcNAc...) asparagine glycosylation is found at Asn-406, Asn-423, Asn-446, Asn-455, Asn-588, Asn-622, Asn-704, Asn-745, Asn-759, Asn-772, Asn-778, and Asn-913.

The protein belongs to the glycosyl hydrolase 35 family.

It localises to the secreted. The enzyme catalyses Hydrolysis of terminal non-reducing beta-D-galactose residues in beta-D-galactosides.. In terms of biological role, cleaves beta-linked terminal galactosyl residues from gangliosides, glycoproteins, and glycosaminoglycans. The protein is Probable beta-galactosidase E (lacE) of Aspergillus fumigatus (strain CBS 144.89 / FGSC A1163 / CEA10) (Neosartorya fumigata).